Consider the following 214-residue polypeptide: Uracil phosphoribosyltransferase (214 aa).

5-phospho-alpha-D-ribose 1-diphosphate is bound by residues Arg-81, Arg-106, and 133–141; that span reads DPMLATGNS. Uracil contacts are provided by residues Ile-196 and 201–203; that span reads GDA. Residue Asp-202 participates in 5-phospho-alpha-D-ribose 1-diphosphate binding.

This sequence belongs to the UPRTase family. It depends on Mg(2+) as a cofactor.

It carries out the reaction UMP + diphosphate = 5-phospho-alpha-D-ribose 1-diphosphate + uracil. It functions in the pathway pyrimidine metabolism; UMP biosynthesis via salvage pathway; UMP from uracil: step 1/1. Allosterically activated by GTP. Functionally, catalyzes the conversion of uracil and 5-phospho-alpha-D-ribose 1-diphosphate (PRPP) to UMP and diphosphate. In Legionella pneumophila subsp. pneumophila (strain Philadelphia 1 / ATCC 33152 / DSM 7513), this protein is Uracil phosphoribosyltransferase.